Here is a 78-residue protein sequence, read N- to C-terminus: Putative DNA-binding protein MT0521 (78 aa).

The H-T-H motif DNA-binding region spans 24–45; it reads LLTVAEVAALMRVSKMTVYRLV.

This chain is Putative DNA-binding protein MT0521, found in Mycobacterium tuberculosis (strain CDC 1551 / Oshkosh).